The following is a 148-amino-acid chain: 3-dehydroquinate dehydratase (148 aa).

The Proton acceptor role is filled by Tyr-22. Substrate-binding residues include Asn-73, His-79, and Asp-86. The Proton donor role is filled by His-99. Residues 100-101 (LS) and Arg-110 each bind substrate.

It belongs to the type-II 3-dehydroquinase family. Homododecamer.

The enzyme catalyses 3-dehydroquinate = 3-dehydroshikimate + H2O. Its pathway is metabolic intermediate biosynthesis; chorismate biosynthesis; chorismate from D-erythrose 4-phosphate and phosphoenolpyruvate: step 3/7. Its function is as follows. Catalyzes a trans-dehydration via an enolate intermediate. The polypeptide is 3-dehydroquinate dehydratase (Prochlorococcus marinus (strain MIT 9211)).